A 386-amino-acid chain; its full sequence is Oxysterol-binding protein-related protein 4A (386 aa).

This sequence belongs to the OSBP family. Expressed in roots, stems and flowers.

Its function is as follows. May be involved in the transport of sterols. This is Oxysterol-binding protein-related protein 4A (ORP4A) from Arabidopsis thaliana (Mouse-ear cress).